The following is a 691-amino-acid chain: MARDFPLERVRNIGIAAHIDAGKTTTTERILFYSGVVHKIGEVHDGAAVTDWMDQERERGITITAAAISTSWQDHRINIIDTPGHVDFTIEVERSMRVLDGVIAVFCAVGGVQPQSETVWRQADRYSVPRMVFVNKMDRTGADFLKVNKQIKERLKANAFPIQLPIGAEGDLTGIIDLVSNKAYLYKNDLGTDIEEAPIPDEMKDEALEWRSKLMESVAENDEELIEIFLDKGELTEDQLKKGIREGVLKHGLVPVLCGSAFKNKGVQLVLDAVVDYLPAPVDVKPIQGVLPNGKEDIRPSDDNAPFSALAFKVMSDPYGKLTFVRMYSGVLSKGSYVMNSTKDAKERISRLVILKADEREEVDELRAGDLGAVLGLKNTTTGDTLCTTDDPIVLETLFIPEPVISVAVEPKTKGDMEKLSKALQALSEEDPTFRVSTDQETNQTVIAGMGELHLEILVDRMLREFKVEANIGAPQVSYRETIRSSSRGEGKYARQTGGKGQYGHVVIEMEPAEVGKGFEFVNKIVGGTVPKEYIGPASNGMKETCESGVLAGYPLIDVKVTLVDGSFHDVDSSEMAFKIAGSMAFKDGVKKCNPVLLEPMMKVEVESPDDFLGSVIGDLSSRRGQVEGQSVDDGLSKVQAKVPLAEMFGYATQLRSMTQGRGIFSMEFANYEEVPRNVAEAIISKNQGNS.

A tr-type G domain is found at Glu8–Val282. GTP-binding positions include Ala17–Thr24, Asp81–His85, and Asn135–Asp138.

The protein belongs to the TRAFAC class translation factor GTPase superfamily. Classic translation factor GTPase family. EF-G/EF-2 subfamily.

It localises to the cytoplasm. Functionally, catalyzes the GTP-dependent ribosomal translocation step during translation elongation. During this step, the ribosome changes from the pre-translocational (PRE) to the post-translocational (POST) state as the newly formed A-site-bound peptidyl-tRNA and P-site-bound deacylated tRNA move to the P and E sites, respectively. Catalyzes the coordinated movement of the two tRNA molecules, the mRNA and conformational changes in the ribosome. This Prochlorococcus marinus (strain MIT 9515) protein is Elongation factor G.